The primary structure comprises 326 residues: Prenyl transferase nodC (326 aa).

A helical transmembrane segment spans residues 8–28; it reads LAAVLFSALFSLGVILVHLPW. H95 lines the isopentenyl diphosphate pocket. 2 residues coordinate Mg(2+): D102 and D106. Residue R111 participates in dimethylallyl diphosphate binding. Residue N139 is glycosylated (N-linked (GlcNAc...) asparagine). K195 provides a ligand contact to dimethylallyl diphosphate. N210 carries N-linked (GlcNAc...) asparagine glycosylation.

Belongs to the FPP/GGPP synthase family.

Its subcellular location is the membrane. It participates in secondary metabolite biosynthesis. Functionally, cytochrome P450 monooxygenase; part of the gene cluster that mediates the biosynthesis of the indole diterpenes nodulisporic acids (NA). Nodulisporic acid A (NAA) and its chemically modified derivatives are of particular significance because of their highly potent insecticidal activity against blood-feeding arthropods and lack of observable adverse effects on mammals, in particular the tremogenicity associated with the paspaline-derived IDTs is not observed. The geranylgeranyl diphosphate (GGPP) synthase ggs1, localized outside of the cluster, is proposed to catalyze the first step in nodulisporic acid biosynthesis via conversion of farnesyl pyrophosphate and isopentyl pyrophosphate into geranylgeranyl pyrophosphate (GGPP). Condensation of indole-3-glycerol phosphate with GGPP by the prenyl transferase nodC then forms 3-geranylgeranylindole (3-GGI). Epoxidation by the FAD-dependent monooxygenase nodM leads to a single-epoxidized-GGI that is substrate of the terpene cyclase nodB for cyclization to yield emindole SB. The terminal methyl carbon, C28, of emindole SB is then oxidized by the cytochrome P450 monooxygenase nodW to produce nodulisporic acid F (NAF), the pentacyclic core of NAA. NAF is converted to nodulisporic acid E (NAE) via prenylation. This step is probably performed by one of the indole diterpene prenyltransferases nodD1 or nodD2. Several oxidation steps performed by the FAD-linked oxidoreductase nodO and one of the cytochrome P450 monooxygenase nodR, nodX or nodZ further convert NAE to nodulisporic acid D (NAD). NAD is substrate of cytochrome P450 monooxygenase nodJ to produce the precursor of nodulisporic acid C (NAC), converted to NAC by one of the indole diterpene prenyltransferases nodD1 or nodD2. The FAD-dependent monooxygenase nodY2 then oxidizes NAC to nodulisporic acid B (NAB). Finally NAB is converted to NAA by one of the cytochrome P450 monooxygenases nodR, nodX or nodZ. The polypeptide is Prenyl transferase nodC (Hypoxylon pulicicidum).